A 512-amino-acid chain; its full sequence is SWI/SNF complex subunit SWI3A (512 aa).

An SWIRM domain is found at 13–110 (YTIPAQSSWF…FSSSLKKNDH (98 aa)). The region spanning 223-274 (SAAAVWTEEEILLLLESVLKHGDDWELISQSVSTKSRLDCISKLIELPFGEF) is the SANT domain. The segment at 291-325 (DENTEQVQTDGQEHEETETREEKEDRVNEDEPPAK) is disordered. A coiled-coil region spans residues 424 to 488 (ALGAAAAQAK…IEGVKETIIQ (65 aa)).

As to quaternary structure, homodimers and heterodimers. Interacts with SWI3B, SWI3C, BSH, and the C-terminus of FCA, but not with BRM or SWI3D. In terms of tissue distribution, expressed in roots, stems, leaves and flowers, but not in siliques.

The protein resides in the nucleus. Component of a multiprotein complex equivalent of the SWI/SNF complex, an ATP-dependent chromatin-remodeling complex, which is required for the positive and negative regulation of gene expression of a large number of genes. It changes chromatin structure by altering DNA-histone contacts within a nucleosome, leading eventually to a change in nucleosome position, thus facilitating or repressing binding of gene-specific transcription factors. The sequence is that of SWI/SNF complex subunit SWI3A (SWI3A) from Arabidopsis thaliana (Mouse-ear cress).